The chain runs to 230 residues: Ubiquitin carboxyl-terminal hydrolase isozyme L3 (230 aa).

The UCH catalytic domain occupies 5–229 (RWLPLEANPE…LRFNAIALSA (225 aa)). The tract at residues 8–13 (PLEANP) is interaction with ubiquitin. Residue Cys-95 is the Nucleophile of the active site. Ser-130 bears the Phosphoserine mark. The interval 152–159 (AHEGQTEA) is interaction with ubiquitin. Crossover loop which restricts access of large ubiquitin adducts to the active site. His-169 acts as the Proton donor in catalysis. An interaction with ubiquitin region spans residues 219–224 (ELRFNA).

Belongs to the peptidase C12 family. Preferentially binds diubiquitin; the interaction does not hydrolyze diubiquitin but, in vitro, inhibits the hydrolyzing activity on other substrates.

It localises to the cytoplasm. The enzyme catalyses Thiol-dependent hydrolysis of ester, thioester, amide, peptide and isopeptide bonds formed by the C-terminal Gly of ubiquitin (a 76-residue protein attached to proteins as an intracellular targeting signal).. Its activity is regulated as follows. Inhibited by monoubiquitin and diubiquitin. In terms of biological role, deubiquitinating enzyme (DUB) that controls levels of cellular ubiquitin through processing of ubiquitin precursors and ubiquitinated proteins. Thiol protease that recognizes and hydrolyzes a peptide bond at the C-terminal glycine of either ubiquitin or NEDD8. Has a 10-fold preference for Arg and Lys at position P3''. Deubiquitinates ENAC in apical compartments, thereby regulating apical membrane recycling. Indirectly increases the phosphorylation of IGFIR, AKT and FOXO1 and promotes insulin-signaling and insulin-induced adipogenesis. Required for stress-response retinal, skeletal muscle and germ cell maintenance. May be involved in working memory. Can hydrolyze UBB(+1), a mutated form of ubiquitin which is not effectively degraded by the proteasome. The polypeptide is Ubiquitin carboxyl-terminal hydrolase isozyme L3 (UCHL3) (Bos taurus (Bovine)).